Reading from the N-terminus, the 455-residue chain is Succinyl-CoA--L-malate CoA-transferase alpha subunit (455 aa).

Positions Met1–Gln58 are disordered. Composition is skewed to polar residues over residues Leu7–Met28 and Pro48–Gln58. Residue Asp227 is the Nucleophile of the active site.

Belongs to the CoA-transferase III family. Forms a large complex composed of six heterodimers (alpha, beta).

The enzyme catalyses succinyl-CoA + (S)-malate = (S)-malyl-CoA + succinate. It catalyses the reaction (3S)-citramalate + succinyl-CoA = (3S)-citramalyl-CoA + succinate. Involved in the 3-hydroxypropionate cycle used for autotrophic carbon dioxide fixation. Catalyzes the transfer of CoA moiety from succinyl-CoA to L-malate to yield L-malyl-CoA. The protein is Succinyl-CoA--L-malate CoA-transferase alpha subunit (smtA) of Chloroflexus aurantiacus (strain ATCC 29366 / DSM 635 / J-10-fl).